Here is a 499-residue protein sequence, read N- to C-terminus: MELKTKSGDPARQRTACVVVGVYERRRMSEAARAVDAASDGYLSHLLRRGDLEGEAGQTLLLPDCPGVRTDRVLLVGCGRERDFNERTYRKAVTAAARALEQAGTGEAILFLPELPVRGRDVAWRVAATAEILETTLYRFDTYKSDPRPPRRPLRQATLAVPRRADLRRAQPALTLGQAAGRGANFSRDLGNTPANICTPGYLGEQAEALAQRFDGVRAEILGPAELEEQGLAALLAVARGAEAPPRLVVLHYRGADDDQAPVALVGKGITFDSGGISIKPSASMDEMKYDMSGAAAVFGAVHAAAEAQLPLNLVAVIPATENMPDGRATRPGDIIDSLDGQRIEVLNTDAEGRLVLADGLAYARRLEPSEVVDVATLTGAAIIGLGHHRHAVMGNAPGLVRDLLQAGERAADRGWELPLDEEYDEQLRSPFADVANIGGQPAGTITAGCFLQRFARGLRWAHLDIAGTAWKSGEHKGATGRPVPLLTHFLAGRAGWTL.

Lysine 268 and aspartate 273 together coordinate Mn(2+). Lysine 280 is a catalytic residue. 3 residues coordinate Mn(2+): aspartate 291, aspartate 350, and glutamate 352. Residue arginine 354 is part of the active site.

The protein belongs to the peptidase M17 family. Mn(2+) is required as a cofactor.

It localises to the cytoplasm. The catalysed reaction is Release of an N-terminal amino acid, Xaa-|-Yaa-, in which Xaa is preferably Leu, but may be other amino acids including Pro although not Arg or Lys, and Yaa may be Pro. Amino acid amides and methyl esters are also readily hydrolyzed, but rates on arylamides are exceedingly low.. It catalyses the reaction Release of an N-terminal amino acid, preferentially leucine, but not glutamic or aspartic acids.. Presumably involved in the processing and regular turnover of intracellular proteins. Catalyzes the removal of unsubstituted N-terminal amino acids from various peptides. This is Probable cytosol aminopeptidase from Halorhodospira halophila (strain DSM 244 / SL1) (Ectothiorhodospira halophila (strain DSM 244 / SL1)).